Reading from the N-terminus, the 153-residue chain is MRCPFCGYEDTRVLDSRELSEGRAIRRRRECPQCHARFTTYERYETGPITVIKKDGRREKFDRKKILNGLLKAFEKRPITVDDMERIVDNIVSQLQKSGTLEVPSELIGKLVMEELRKVDQVAYVRFASVYKDFREIDQFIEVIKELRNEGQI.

A zinc finger spans residues 3–34 (CPFCGYEDTRVLDSRELSEGRAIRRRRECPQC). An ATP-cone domain is found at 49–139 (ITVIKKDGRR…VYKDFREIDQ (91 aa)).

The protein belongs to the NrdR family. The cofactor is Zn(2+).

Negatively regulates transcription of bacterial ribonucleotide reductase nrd genes and operons by binding to NrdR-boxes. The protein is Transcriptional repressor NrdR of Fervidobacterium nodosum (strain ATCC 35602 / DSM 5306 / Rt17-B1).